Consider the following 540-residue polypeptide: Chaperonin GroEL (540 aa).

ATP-binding positions include 30 to 33 (TLGP), Lys-51, 87 to 91 (DGTTT), Gly-415, and Asp-496.

Belongs to the chaperonin (HSP60) family. As to quaternary structure, forms a cylinder of 14 subunits composed of two heptameric rings stacked back-to-back. Interacts with the co-chaperonin GroES.

The protein localises to the cytoplasm. The catalysed reaction is ATP + H2O + a folded polypeptide = ADP + phosphate + an unfolded polypeptide.. Functionally, together with its co-chaperonin GroES, plays an essential role in assisting protein folding. The GroEL-GroES system forms a nano-cage that allows encapsulation of the non-native substrate proteins and provides a physical environment optimized to promote and accelerate protein folding. This chain is Chaperonin GroEL, found in Thermodesulfovibrio yellowstonii (strain ATCC 51303 / DSM 11347 / YP87).